A 943-amino-acid chain; its full sequence is MTSKSVNSFGAHDTLKVGEKSYQIYRLDAVPNTAKLPYSLKVLAENLLRNEDGSNITKDHIEAIANWDPKAEPSIEIQYTPARVVMQDFTGVPCIVDLATMREAIADLGGNPDKVNPLAPADLVIDHSVIADLFGRADAFERNVEIEYQRNGERYQFLRWGQGAFDDFKVVPPGTGIVHQVNIEYLASVVMTRDGVAYPDTCVGTDSHTTMVNGLGVLGWGVGGIEAEAAMLGQPVSMLIPRVVGFRLTGEIQPGVTATDVVLTVTEMLRQHGVVGKFVEFYGEGVAEVPLANRATLGNMSPEFGSTAAIFPIDEETIKYLRFTGRTPEQVALVEAYAKAQGMWHDPKHEPEFSEYLELNLSDVVPSIAGPKRPQDRIALAQAKSTFREQIYHYVGNGSPDSPHDPHSKLDEVVEETFPASDPGQLTFANDDVATDETVHSAAAHADGRVSNPVRVKSDELGEFVLDHGAVVIAAITSCTNTSNPEVMLGAALLARNAVEKGLTSKPWVKTTIAPGSQVVNDYYDRSGLWPYLEKLGFYLVGYGCTTCIGNSGPLPEEISKAVNDNDLSVTAVLSGNRNFEGRINPDVKMNYLASPPLVIAYALAGTMDFDFQTQPLGQDKDGKNVFLRDIWPSQQDVSDTIAAAINQEMFTRNYADVFKGDDRWRNLPTPSGNTFEWDPNSTYVRKPPYFEGMTAKPEPVGNISGARVLALLGDSVTTDHISPAGAIKPGTPAARYLDEHGVDRKDYNSFGSRRGNHEVMIRGTFANIRLRNQLLDDVSGGYTRDFTQPGGPQAFIYDAAQNYAAQHIPLVVFGGKEYGSGSSRDWAAKGTLLLGVRAVIAESFERIHRSNLIGMGVIPLQFPEGKSASSLGLDGTEVFDITGIDVLNDGKTPKTVCVQATKGDGATIEFDAVVRIDTPGEADYYRNGGILQYVLRNILKSG.

Residues Cys-479, Cys-545, and Cys-548 each contribute to the [4Fe-4S] cluster site.

This sequence belongs to the aconitase/IPM isomerase family. In terms of assembly, monomer. It depends on [4Fe-4S] cluster as a cofactor.

The enzyme catalyses citrate = D-threo-isocitrate. The catalysed reaction is (2S,3R)-3-hydroxybutane-1,2,3-tricarboxylate = 2-methyl-cis-aconitate + H2O. The protein operates within carbohydrate metabolism; tricarboxylic acid cycle; isocitrate from oxaloacetate: step 2/2. It functions in the pathway organic acid metabolism; propanoate degradation. In terms of biological role, involved in the catabolism of short chain fatty acids (SCFA) via the tricarboxylic acid (TCA)(acetyl degradation route) and probably via the 2-methylcitrate cycle I (propionate degradation route). Catalyzes the reversible isomerization of citrate to isocitrate via cis-aconitate. The apo form of AcnA functions as a RNA-binding regulatory protein which binds to selected IRE-like sequences present within the UTRs (untranslated regions) of 3' trxC and 5' IdeR mRNA. Could catalyze the hydration of 2-methyl-cis-aconitate to yield (2R,3S)-2-methylisocitrate. This is Aconitate hydratase A (acn) from Mycobacterium tuberculosis (strain ATCC 25618 / H37Rv).